The sequence spans 355 residues: uncharacterized protein (355 aa).

It localises to the cytoplasm. This is an uncharacterized protein from Saccharomyces cerevisiae (strain ATCC 204508 / S288c) (Baker's yeast).